The chain runs to 761 residues: Xaa-Pro dipeptidyl-peptidase (761 aa).

Active-site charge relay system residues include S349, D469, and H499.

Belongs to the peptidase S15 family. Homodimer.

The protein localises to the cytoplasm. The enzyme catalyses Hydrolyzes Xaa-Pro-|- bonds to release unblocked, N-terminal dipeptides from substrates including Ala-Pro-|-p-nitroanilide and (sequentially) Tyr-Pro-|-Phe-Pro-|-Gly-Pro-|-Ile.. In terms of biological role, removes N-terminal dipeptides sequentially from polypeptides having unsubstituted N-termini provided that the penultimate residue is proline. In Streptococcus equi subsp. zooepidemicus (strain H70), this protein is Xaa-Pro dipeptidyl-peptidase.